Consider the following 453-residue polypeptide: tRNA modification GTPase MnmE (453 aa).

Positions 22, 79, and 119 each coordinate (6S)-5-formyl-5,6,7,8-tetrahydrofolate. Residues 215–376 form the TrmE-type G domain; sequence GMKVVIAGRP…LREHLKACMG (162 aa). A K(+)-binding site is contributed by Asn-225. GTP contacts are provided by residues 225 to 230, 244 to 250, 269 to 272, and 334 to 337; these read NAGKSS, TEIAGTT, DTAG, and NKAD. Ser-229 lines the Mg(2+) pocket. Residues Thr-244, Ile-246, and Thr-249 each contribute to the K(+) site. Thr-250 serves as a coordination point for Mg(2+). Lys-453 provides a ligand contact to (6S)-5-formyl-5,6,7,8-tetrahydrofolate.

Belongs to the TRAFAC class TrmE-Era-EngA-EngB-Septin-like GTPase superfamily. TrmE GTPase family. As to quaternary structure, homodimer. Heterotetramer of two MnmE and two MnmG subunits. K(+) is required as a cofactor.

Its subcellular location is the cytoplasm. Exhibits a very high intrinsic GTPase hydrolysis rate. Involved in the addition of a carboxymethylaminomethyl (cmnm) group at the wobble position (U34) of certain tRNAs, forming tRNA-cmnm(5)s(2)U34. The protein is tRNA modification GTPase MnmE of Aeromonas salmonicida (strain A449).